The sequence spans 206 residues: Methylthioribulose-1-phosphate dehydratase (206 aa).

Zn(2+)-binding residues include histidine 96 and histidine 98.

Belongs to the aldolase class II family. MtnB subfamily. It depends on Zn(2+) as a cofactor.

It carries out the reaction 5-(methylsulfanyl)-D-ribulose 1-phosphate = 5-methylsulfanyl-2,3-dioxopentyl phosphate + H2O. It participates in amino-acid biosynthesis; L-methionine biosynthesis via salvage pathway; L-methionine from S-methyl-5-thio-alpha-D-ribose 1-phosphate: step 2/6. Its function is as follows. Catalyzes the dehydration of methylthioribulose-1-phosphate (MTRu-1-P) into 2,3-diketo-5-methylthiopentyl-1-phosphate (DK-MTP-1-P). The polypeptide is Methylthioribulose-1-phosphate dehydratase (Exiguobacterium sibiricum (strain DSM 17290 / CCUG 55495 / CIP 109462 / JCM 13490 / 255-15)).